An 861-amino-acid chain; its full sequence is E3 ubiquitin-protein ligase HECTD3 (861 aa).

The residue at position 2 (Ala-2) is an N-acetylalanine. Residue Ser-12 is modified to Phosphoserine. One can recognise a DOC domain in the interval Asp-219 to Glu-397. The HECT domain maps to Tyr-512–Ser-857. Cys-823 (glycyl thioester intermediate) is an active-site residue.

Interacts with TRIOBP. Interacts with STX8.

Its subcellular location is the cytoplasm. The protein resides in the perinuclear region. The catalysed reaction is S-ubiquitinyl-[E2 ubiquitin-conjugating enzyme]-L-cysteine + [acceptor protein]-L-lysine = [E2 ubiquitin-conjugating enzyme]-L-cysteine + N(6)-ubiquitinyl-[acceptor protein]-L-lysine.. It functions in the pathway protein modification; protein ubiquitination. E3 ubiquitin ligases accepts ubiquitin from an E2 ubiquitin-conjugating enzyme in the form of a thioester and then directly transfers the ubiquitin to targeted substrates. Mediates ubiquitination of TRIOBP and its subsequent proteasomal degradation, thus facilitating cell cycle progression by regulating the turn-over of TRIOBP. Also mediates ubiquitination of STX8. This is E3 ubiquitin-protein ligase HECTD3 (Hectd3) from Mus musculus (Mouse).